A 72-amino-acid chain; its full sequence is MSKDDVIQMQGEVLENLPNATFRVKLENGHVVLGHISGKMRMHYIRILPGDKVTVELTPYDLTRARIVFRSK.

An S1-like domain is found at 1-72 (MSKDDVIQMQ…TRARIVFRSK (72 aa)).

Belongs to the IF-1 family. In terms of assembly, component of the 30S ribosomal translation pre-initiation complex which assembles on the 30S ribosome in the order IF-2 and IF-3, IF-1 and N-formylmethionyl-tRNA(fMet); mRNA recruitment can occur at any time during PIC assembly.

It is found in the cytoplasm. One of the essential components for the initiation of protein synthesis. Stabilizes the binding of IF-2 and IF-3 on the 30S subunit to which N-formylmethionyl-tRNA(fMet) subsequently binds. Helps modulate mRNA selection, yielding the 30S pre-initiation complex (PIC). Upon addition of the 50S ribosomal subunit IF-1, IF-2 and IF-3 are released leaving the mature 70S translation initiation complex. The protein is Translation initiation factor IF-1 1 of Bordetella avium (strain 197N).